Reading from the N-terminus, the 156-residue chain is ATP synthase subunit b (156 aa).

The chain crosses the membrane as a helical span at residues 5–27 (ITLIGQMITFAIFVGFTMKFVWP).

Belongs to the ATPase B chain family. In terms of assembly, F-type ATPases have 2 components, F(1) - the catalytic core - and F(0) - the membrane proton channel. F(1) has five subunits: alpha(3), beta(3), gamma(1), delta(1), epsilon(1). F(0) has three main subunits: a(1), b(2) and c(10-14). The alpha and beta chains form an alternating ring which encloses part of the gamma chain. F(1) is attached to F(0) by a central stalk formed by the gamma and epsilon chains, while a peripheral stalk is formed by the delta and b chains.

Its subcellular location is the cell inner membrane. Its function is as follows. F(1)F(0) ATP synthase produces ATP from ADP in the presence of a proton or sodium gradient. F-type ATPases consist of two structural domains, F(1) containing the extramembraneous catalytic core and F(0) containing the membrane proton channel, linked together by a central stalk and a peripheral stalk. During catalysis, ATP synthesis in the catalytic domain of F(1) is coupled via a rotary mechanism of the central stalk subunits to proton translocation. Functionally, component of the F(0) channel, it forms part of the peripheral stalk, linking F(1) to F(0). This chain is ATP synthase subunit b, found in Francisella tularensis subsp. tularensis (strain SCHU S4 / Schu 4).